We begin with the raw amino-acid sequence, 762 residues long: Anhydrosialidase (762 aa).

The N-terminal stretch at 1–27 (MGRIGKKAMAIALVSAVMVTPLNVCAT) is a signal peptide. Arginine 293 is a substrate binding site. Catalysis depends on aspartate 318, which acts as the Proton acceptor. BNR repeat units lie at residues 328–339 (AKSTDGGNTWSE), 511–522 (RYSDDEGASWSD), and 571–582 (MYSDDHGDNWTY). Glutamate 595 is an active-site residue. Residue arginine 611 participates in substrate binding. One copy of the BNR 4 repeat lies at 620–631 (VTSIDGGETWSD). Arginine 673 contributes to the substrate binding site. Residue tyrosine 713 is the Nucleophile of the active site.

This sequence belongs to the glycosyl hydrolase 33 family.

It localises to the secreted. The protein localises to the extracellular space. It catalyses the reaction Elimination of alpha-sialyl groups in N-acetylneuraminic acid glycosides, releasing 2,7-anhydro-alpha-N-acetylneuraminate.. The polypeptide is Anhydrosialidase (Macrobdella decora (North American leech)).